Consider the following 348-residue polypeptide: MNTRIGTTGNASPLAADAYPMIDPFGRAVTYLRVSVTDRCDFRCTYCMAENMTFLPKKDLLTLEELDRLCSAFIAKGVRKIRLTGGEPLVRKNIMYLVRQLGKKIGAGLDELTLTTNGSQLSRHAEELYECGVRRINVSLDTLDPEKFRKITRWGDFSKVMEGIDAAQKAGIRIKLNAVALKGFNDAEIPDLLRFAHGRGMDLTVIETMPMGEIDEDRTDQYLPLSELRADLEKQFTLTDIDYQTGGPARYVRVEETGGRLGFITPMTHNFCESCNRVRLTCTGTLYMCLGQNDAADLRAALRATEDDALLHTAIDEAITRKPKGHDFIIDRTHNRPAVARHMSVTGG.

Positions 24–242 (PFGRAVTYLR…EKQFTLTDID (219 aa)) constitute a Radical SAM core domain. Residue R33 participates in GTP binding. 2 residues coordinate [4Fe-4S] cluster: C40 and C44. Position 46 (Y46) interacts with S-adenosyl-L-methionine. A [4Fe-4S] cluster-binding site is contributed by C47. A GTP-binding site is contributed by R82. G86 lines the S-adenosyl-L-methionine pocket. Residue T115 coordinates GTP. Residue S139 participates in S-adenosyl-L-methionine binding. K175 contributes to the GTP binding site. M209 lines the S-adenosyl-L-methionine pocket. The [4Fe-4S] cluster site is built by C272 and C275. 277-279 (RVR) is a GTP binding site. A [4Fe-4S] cluster-binding site is contributed by C289.

Belongs to the radical SAM superfamily. MoaA family. In terms of assembly, monomer and homodimer. It depends on [4Fe-4S] cluster as a cofactor.

It catalyses the reaction GTP + AH2 + S-adenosyl-L-methionine = (8S)-3',8-cyclo-7,8-dihydroguanosine 5'-triphosphate + 5'-deoxyadenosine + L-methionine + A + H(+). Its pathway is cofactor biosynthesis; molybdopterin biosynthesis. In terms of biological role, catalyzes the cyclization of GTP to (8S)-3',8-cyclo-7,8-dihydroguanosine 5'-triphosphate. The protein is GTP 3',8-cyclase of Rhizobium etli (strain CIAT 652).